The sequence spans 718 residues: uncharacterized protein (718 aa).

It belongs to the asfivirus C717R family.

It localises to the virion. This is an uncharacterized protein from African swine fever virus (isolate Pig/Kenya/KEN-50/1950) (ASFV).